The sequence spans 1742 residues: MWPAGAGTKLPCPRDSALRRAAFSGNLTALPSHLVPAGRSVRVFISANPEDTGAERQALRENVYPKLREFCRENYGLEFQVIDLYWGVEEDEWDSPELQKTRMKLLENCLKTSAGPCFVGLLGEKYGNIRIPGEVEASEFEMILDAAIEAKLETKLLEEWYCRDENSVPAAYYLRPKSEMLRSNRNAMQPSTNAENEKTWQEISDEIKKIFKAAVKLLHEKGKMKHSQAKRYLFSAIEDEFDFALGKQTPAFLKKCVCYIRKIANIERFVKIPEMGKYMDITGTEPRIIRDPEAQEKLIKLRDEFIPTIVASSNLRVYTSVTHCDMKLGYSQEIENHYIEGLGKQFYEDMIDIIQATIQQNFDTETDTLYDEILQHSSLCKTYASFYEYKCESLNIVHNYILPSKAGHINPLIIYGGPCTGKTLLLAEVAKKAYGWLHEDTGPESDPVVIVRFLGTTDMSSDLRTLLLSVCEQLAVNYRCLVQSYPKKIHDLCDLFINLLNESSLQRPLVIIFDALEQLSENDDARKLWWLPAHLPRFVRIVLSTLPNKHGILQKLRCLIHEEDNYIELIPRDRKMCSQVLKHQLLRVKRKVTSGQQIYVNNALSKCTLPMFVNLTFREVRHWRSHKDVDESSLSVTVHESIEQLFWSLEKKCGQKLVSRALGYITMAKMGLSEMELEDVLALDNSVMSELKENTRPSNPLRVPYLYIARLKEGLSGYLIERHVKNVTLLVWANRHLQLIAQKLYLQDDNDLREMHTILADYFLGVWSGGRRKAFCLEDPYLNGCLDLENRSLLEEEKHFMEQASFDRQAPDQPWVFQCNPLEPDIFFVNHRKMSELLYHLTRCGKTDDLLYGIIMNFSWLYTMIKIGQFDKVLSDIELAYNYSQEKELKFLANTLRSIKNKVTAFPGSLSAELQQRLLPVVSSLPKLRHLLLECDKDGPKYCSIVPLHSSMDVTYSPERLPLSSSHLHVTEILPTCNPSTVLTALENGSISTWDVETRQLLRQITTAQSVILGMKLTSDEKYLVVATTNNTLLIYDNVNSCLLSEVEIKGTKHGSSATYINGFTLSANHALAWLEASKDVTVIDLLYGWPLYQFHCWYEVTCVQCSLDGLYAFCGQYLNTTTIFHLGSGEKLCTVTSEFSGGFVKFLLILDTAQEMVMVDSEGSLSVWNTEDISSPQLTDDFDCRREDSEVVSIELSEDQSAVLICKALSIELLDTGLWKVAEKFRAKHNERFISAVLSKNGDCIIATMENTSAVFFWRRDTGQCMASLQEISGSIVKLVKSSHHNMLLSLSTSGVLSIWDIDIITAMSNIDKTGKPIQSLLLPARGEIIYSLDGSDCVHKWNFSSGFIEAVFKHEGIVEHCVLTSTGDIMVTSDDKSSQYVWHTSSGENLFRINGQRISQLLITHNDQFVVSLCEENASRVWRLATGHRVCNILTTLQNAFITSANTFVVGMTKSKVLAVSLWTGSITKKFCCEDGTTIVNFKLIPDCPDIIVFITSAETVNIWSLTDEVICRRVQLPNNFLKNLEDFEISPNGKLGIIARGDENINVLDLYSGKLRVVHASGIIWRQRLSRDGRYLVYICFRNGEEEDENGAIFSLIVMRLADGKNIGACSLYKTPTFLALSQRHLNIIVGFDDGSIGIYTVVDRVDAALKIKIATSNSRQIFNNATHTSRPKCNSYCFKISVDCLWRESTEVFARDSPITVSDSTESNEATPSKKHNSCYERVCSALEARGHSYAPDN.

LRR repeat units follow at residues 386 to 410, 677 to 698, 724 to 747, 883 to 906, and 925 to 953; these read FYEY…GHIN, LEDV…TRPS, VKNV…LYLQ, YSQE…VTAF, and LPKL…SSMD. In terms of domain architecture, NACHT spans 410-737; that stretch reads NPLIIYGGPC…TLLVWANRHL (328 aa). WD repeat units lie at residues 963-1004, 1007-1046, 1140-1179, 1229-1271, 1272-1311, 1314-1353, 1355-1394, 1396-1434, 1476-1516, 1522-1564, and 1614-1653; these read LSSS…LLRQ, TAQS…LLSE, FSGG…SPQL, KHNE…ASLQ, EISG…AMSN, KTGK…IEAV, KHEG…NLFR, NGQR…RVCN, EDGT…ICRR, NFLK…VHAS, and SLYK…DAAL.

The chain is NACHT and WD repeat domain-containing protein 2 (NWD2) from Homo sapiens (Human).